We begin with the raw amino-acid sequence, 189 residues long: Elongation factor P (189 aa).

Position 34 is an N6-(3,6-diaminohexanoyl)-5-hydroxylysine (K34).

This sequence belongs to the elongation factor P family. Post-translationally, may be beta-lysylated on the epsilon-amino group of Lys-34 by the combined action of EpmA and EpmB, and then hydroxylated on the C5 position of the same residue by EpmC (if this protein is present). Lysylation is critical for the stimulatory effect of EF-P on peptide-bond formation. The lysylation moiety may extend toward the peptidyltransferase center and stabilize the terminal 3-CCA end of the tRNA. Hydroxylation of the C5 position on Lys-34 may allow additional potential stabilizing hydrogen-bond interactions with the P-tRNA.

Its subcellular location is the cytoplasm. Its pathway is protein biosynthesis; polypeptide chain elongation. Functionally, involved in peptide bond synthesis. Alleviates ribosome stalling that occurs when 3 or more consecutive Pro residues or the sequence PPG is present in a protein, possibly by augmenting the peptidyl transferase activity of the ribosome. Modification of Lys-34 is required for alleviation. This is Elongation factor P from Teredinibacter turnerae (strain ATCC 39867 / T7901).